Reading from the N-terminus, the 614-residue chain is Zinc metalloproteinase-disintegrin-like protein F1 (614 aa).

Positions 1-20 (MLQVLLVTICLAVFPYQGSS) are cleaved as a signal peptide. Positions 21 to 192 (IILESGNVND…IKASQFILTP (172 aa)) are excised as a propeptide. A Cys-switch; controls maturation motif is present at residues 167–173 (PKKCGVT). Glu193 carries the pyrrolidone carboxylic acid (Glu) modification. The Peptidase M12B domain maps to 202–398 (KYIKLAIVVD…HTPRCILNEP (197 aa)). Asn221 carries N-linked (GlcNAc...) asparagine glycosylation. 3 disulfides stabilise this stretch: Cys313–Cys393, Cys353–Cys377, and Cys355–Cys360. His338 contributes to the Zn(2+) binding site. The Metal-binding signature appears at 338–349 (HELGHNLGINHD). Catalysis depends on Glu339, which acts as the Proton acceptor. Residues His342 and His348 each contribute to the Zn(2+) site. Residues 406-492 (PAVCGNYVVE…ECPMDHIQKN (87 aa)) enclose the Disintegrin domain. Ca(2+) is bound by residues Val408, Asn411, Glu415, Glu418, and Asp421. 14 disulfide bridges follow: Cys409/Cys438, Cys420/Cys433, Cys422/Cys428, Cys432/Cys455, Cys446/Cys452, Cys451/Cys477, Cys464/Cys484, Cys471/Cys503, Cys496/Cys508, Cys515/Cys565, Cys530/Cys575, Cys543/Cys553, Cys560/Cys601, and Cys595/Cys607. A D/ECD-tripeptide motif is present at residues 470–472 (ECD). 3 residues coordinate Ca(2+): Asp472, Glu475, and Asp487. N-linked (GlcNAc...) asparagine glycosylation is present at Asn534.

This sequence belongs to the venom metalloproteinase (M12B) family. P-III subfamily. P-IIIa sub-subfamily. In terms of assembly, monomer. Requires Zn(2+) as cofactor. Post-translationally, N-glycosylated. The N-terminus is blocked. In terms of tissue distribution, expressed by the venom gland (at protein level). Expressed by the venom gland.

It localises to the secreted. Its activity is regulated as follows. The alpha-fibrinogenase activity is inhibited by EDTA, but not by pefabloc. Its function is as follows. Zinc metalloprotease that has fibrinogenolytic activity. Does not have hemorrhagic activity in rats. Cleaves insulin B chain at '38-Ala-|-Leu-39' and '40-Tyr-|-Leu-41' bonds. Hydrolyzes only partially and weakly isolated extracellular matrix (ECM) bovine fibronectin and basal membrane (BM) protein human collagen IV in vitro. Murine laminin is not hydrolyzed, neither isolated nor in a solubilized BM preparation. Nidogen is hydrolyzed at '350-Ser-|-Phe-351' bond in a solubilized BM preparation. Hydrolyzes plasma proteins involved in blood coagulation in vitro. Has alpha-fibrinogenase activity cleaving human fibrinogen alpha chain at '432-Lys-|-Leu-433' bond, but does not cleave beta or gamma chains. Does not cleave fibrin. Hydrolyzes only partially bovine prothrombin at '200-Ser-|-Gly-201' bond, factor X (FX) heavy chain, and very slowly, FX light chain and plasminogen in vitro, without activating any of them. Has no effect in plasma thrombin generation. Does not inhibit platelet aggregation induced by collagen in vitro. May have a delayed pathological action as an anticoagulant in envenomed patients after they received serotherapy as it is not recognized by the venom antiserum. This Vipera ammodytes ammodytes (Western sand viper) protein is Zinc metalloproteinase-disintegrin-like protein F1.